Here is a 426-residue protein sequence, read N- to C-terminus: Docking protein 3 (426 aa).

Residues Pro4–Phe115 form the PH domain. One can recognise an IRS-type PTB domain in the interval Asp145–Pro249. Residues Gln243–His282 form a disordered region. The segment covering Glu247–Pro260 has biased composition (polar residues). Tyr331 bears the Phosphotyrosine mark. The segment at Gly357–Ser426 is disordered. The span at Lys402–Leu411 shows a compositional bias: basic residues.

This sequence belongs to the DOK family. Type A subfamily. In terms of assembly, homooligomer. Interacts with GRB2 and INPP5D/SHIP. Post-translationally, tyrosine-phosphorylated in the presence of GRB2.

Its subcellular location is the cytoplasm. The protein resides in the cell membrane. DOK proteins are enzymatically inert adaptor or scaffolding proteins. They provide a docking platform for the assembly of multimolecular signaling complexes. Plays a role as negative regulator of the mobilization of calcium ions and of calcium signaling. The chain is Docking protein 3 (DOK3) from Gallus gallus (Chicken).